The primary structure comprises 531 residues: UDP-glucuronosyltransferase 1A6 (531 aa).

The signal sequence occupies residues 1 to 26 (MACLLPAAQTLPAGFLFLVLWASVLG). N-linked (GlcNAc...) asparagine glycans are attached at residues Asn-293 and Asn-431. The chain crosses the membrane as a helical span at residues 489-505 (VIGFLLAIVLTVVFIVF).

Belongs to the UDP-glycosyltransferase family. Expressed in liver, kidney and at very low levels in colon.

It is found in the microsome. The protein resides in the endoplasmic reticulum membrane. It catalyses the reaction glucuronate acceptor + UDP-alpha-D-glucuronate = acceptor beta-D-glucuronoside + UDP + H(+). It carries out the reaction (5Z,8Z,11Z,14Z)-eicosatetraenoate + UDP-alpha-D-glucuronate = O-[(5Z),(8Z),(11Z),(14Z)-eicosatetraenoyl]-beta-D-glucuronate + UDP. The catalysed reaction is 15-hydroxy-(5Z,8Z,11Z,13E)-eicosatetraenoate + UDP-alpha-D-glucuronate = 15-O-(beta-D-glucuronosyl)-(5Z,8Z,11Z,14Z)-eicosatetraenoate + UDP + H(+). The enzyme catalyses (E)-ferulate + UDP-alpha-D-glucuronate = (E)-4-O-(beta-D-glucuronosyl)-ferulate + UDP + H(+). It catalyses the reaction (E)-ferulate + UDP-alpha-D-glucuronate = (E)-ferulic acid beta-D-glucuronate ester + UDP. UDP-glucuronosyltransferase (UGT) that catalyzes phase II biotransformation reactions in which lipophilic substrates are conjugated with glucuronic acid to facilitate their inactivation and excretion from the body. Essential for the elimination and detoxification of drugs, xenobiotics and endogenous compounds. Involved in the glucuronidation of arachidonic acid (AA) and AA-derived eicosanoids including 15-HETE and 20-HETE. Conjugates small planar phenolic molecules such as 4-nitrophenol, 1-naphthol, and 4-methylumbelliferone. The bulky phenol 4-hydroxybiphenyl, androgens and estrogens are not substrates. 2-hydroxybiphenyl is an excellent substrate. Involved in the glucuronidation of the phytochemical ferulic acid at the phenolic or the carboxylic acid group. The sequence is that of UDP-glucuronosyltransferase 1A6 from Mus musculus (Mouse).